We begin with the raw amino-acid sequence, 280 residues long: MVFKFPTPPGTQKKAGTTATKPAPKATTKKVATSTGTRSGGVGYRKYQGDALWLPNTTRPEWLDGSLPGDRGFDPLGLSKPSEFVVIGVDENDQNAAKNNKGSVEAIVQATPDEVSSENRLAPYSEVFGLARFRECELIHGRWAMLACLGALVAEATTGVSWVEAGKVELDGASYAGLSLPFSITQLIWIEVILVGGAEFYRNSETNPEKRCYPGGVFDPLKLASEDEERAFRLKTAEIKHARLAMVSFFGYGVQALSTGEGALGSLAKFADGLNNGKGL.

Residues 1-42 are disordered; that stretch reads MVFKFPTPPGTQKKAGTTATKPAPKATTKKVATSTGTRSGGV. Position 2 is an N-acetylvaline (V2). A Phosphothreonine; in State 1 and State 2 modification is found at T7. Residues 10–37 show a composition bias toward low complexity; that stretch reads GTQKKAGTTATKPAPKATTKKVATSTGT. T17 bears the Phosphothreonine; in State 2 mark. At T33 the chain carries Phosphothreonine; in State 1 and State 2. Residue Y47 participates in chlorophyll b binding. 2 residues coordinate chlorophyll a: F73 and S79. A Phosphoserine; in State 2 modification is found at S103. 2 residues coordinate chlorophyll a: E137 and H140. A run of 2 helical transmembrane segments spans residues 143-163 and 176-196; these read WAMLACLGALVAEATTGVSWV and AGLSLPFSITQLIWIEVILVG. Positions 183, 199, and 202 each coordinate chlorophyll b. E238, H241, R243, and Q255 together coordinate chlorophyll a. The helical transmembrane segment at 244–264 threads the bilayer; that stretch reads LAMVSFFGYGVQALSTGEGAL.

Belongs to the light-harvesting chlorophyll a/b-binding (LHC) protein family. The LHC complex consists of chlorophyll a-b binding proteins. It depends on Binds at least 14 chlorophylls (8 Chl-a and 6 Chl-b) and carotenoids such as lutein and neoxanthin. as a cofactor. Post-translationally, reversible phosphorylation plays a role in the State transition process and determines the affinity of LHCII for PSI and PSII.

The protein localises to the plastid. Its subcellular location is the chloroplast thylakoid membrane. In terms of biological role, the light-harvesting complex (LHC) functions as a light receptor, it captures and delivers excitation energy to photosystems with which it is closely associated. CP29 facilitates the State 1 to State 2 transition, where State I is induced by excess photosystem I (PSI) light and State 2 is induced by excess photosystem II (PSII) light. In Chlamydomonas reinhardtii (Chlamydomonas smithii), this protein is Chlorophyll a-b binding protein CP29.